A 345-amino-acid chain; its full sequence is Transmembrane protein 144 homolog (345 aa).

The next 10 membrane-spanning stretches (helical) occupy residues 3–23 (IAVG…MFVP), 32–52 (GIFV…VVYS), 61–81 (PLAM…VPIM), 84–104 (IGIG…GWAA), 120–140 (PFLN…FSQI), 193–213 (LAII…VPVI), 233–253 (VFSH…GYVI), 265–285 (LVGP…SWFV), 293–313 (AVSF…WSVF), and 324–344 (LRLL…VGVS).

Belongs to the TMEM144 family.

It is found in the membrane. The sequence is that of Transmembrane protein 144 homolog from Caenorhabditis elegans.